Reading from the N-terminus, the 565-residue chain is CTP synthase (565 aa).

An amidoligase domain region spans residues 1 to 268 (MQTKYIFVTG…GELVVDRFYP (268 aa)). Ser-14 provides a ligand contact to CTP. Ser-14 serves as a coordination point for UTP. 15 to 20 (SLGKGI) provides a ligand contact to ATP. L-glutamine is bound at residue Tyr-55. Asp-72 is an ATP binding site. Mg(2+)-binding residues include Asp-72 and Glu-142. CTP-binding positions include 149–151 (DIE), 189–194 (KTKPTQ), and Lys-225. Residues 189 to 194 (KTKPTQ) and Lys-225 each bind UTP. Positions 301–543 (PIALVGKYVE…VRACTAYAHE (243 aa)) constitute a Glutamine amidotransferase type-1 domain. Gly-363 is a binding site for L-glutamine. The active-site Nucleophile; for glutamine hydrolysis is the Cys-390. Residues 391–394 (LGLQ), Glu-414, and Arg-471 contribute to the L-glutamine site. Active-site residues include His-516 and Glu-518. The disordered stretch occupies residues 545-565 (DLVTSPQPPERKAVPLASVDM).

The protein belongs to the CTP synthase family. In terms of assembly, homotetramer.

It catalyses the reaction UTP + L-glutamine + ATP + H2O = CTP + L-glutamate + ADP + phosphate + 2 H(+). The catalysed reaction is L-glutamine + H2O = L-glutamate + NH4(+). The enzyme catalyses UTP + NH4(+) + ATP = CTP + ADP + phosphate + 2 H(+). The protein operates within pyrimidine metabolism; CTP biosynthesis via de novo pathway; CTP from UDP: step 2/2. Its activity is regulated as follows. Allosterically activated by GTP, when glutamine is the substrate; GTP has no effect on the reaction when ammonia is the substrate. The allosteric effector GTP functions by stabilizing the protein conformation that binds the tetrahedral intermediate(s) formed during glutamine hydrolysis. Inhibited by the product CTP, via allosteric rather than competitive inhibition. Functionally, catalyzes the ATP-dependent amination of UTP to CTP with either L-glutamine or ammonia as the source of nitrogen. Regulates intracellular CTP levels through interactions with the four ribonucleotide triphosphates. In Salinibacter ruber (strain DSM 13855 / M31), this protein is CTP synthase.